We begin with the raw amino-acid sequence, 133 residues long: Small ribosomal subunit protein uS11 (133 aa).

The interval 1-22 (MPPKTRGAVRKPRKKDKKNIAL) is disordered. Positions 7 to 17 (GAVRKPRKKDK) are enriched in basic residues.

Belongs to the universal ribosomal protein uS11 family. Part of the 30S ribosomal subunit. Interacts with proteins S7 and S18. Binds to IF-3.

Its function is as follows. Located on the platform of the 30S subunit, it bridges several disparate RNA helices of the 16S rRNA. Forms part of the Shine-Dalgarno cleft in the 70S ribosome. The protein is Small ribosomal subunit protein uS11 of Renibacterium salmoninarum (strain ATCC 33209 / DSM 20767 / JCM 11484 / NBRC 15589 / NCIMB 2235).